The primary structure comprises 495 residues: Cobyric acid synthase (495 aa).

One can recognise a GATase cobBQ-type domain in the interval 249-443 (EININVIRLP…LHGLFDNGAW (195 aa)). Cysteine 330 (nucleophile) is an active-site residue. Histidine 435 is a catalytic residue.

The protein belongs to the CobB/CobQ family. CobQ subfamily.

It participates in cofactor biosynthesis; adenosylcobalamin biosynthesis. Its function is as follows. Catalyzes amidations at positions B, D, E, and G on adenosylcobyrinic A,C-diamide. NH(2) groups are provided by glutamine, and one molecule of ATP is hydrogenolyzed for each amidation. In Gloeothece citriformis (strain PCC 7424) (Cyanothece sp. (strain PCC 7424)), this protein is Cobyric acid synthase.